The primary structure comprises 320 residues: Meso-diaminopimelate D-dehydrogenase (320 aa).

NADP(+)-binding positions include 11–14 (YGNL), 35–37 (SRR), 65–68 (CMGS), 88–90 (TYD), and 117–121 (TGWDP). Residues D90, D120, W144, 150-151 (QG), T169, R195, H244, and N270 contribute to the substrate site.

As to quaternary structure, homodimer.

The catalysed reaction is meso-2,6-diaminopimelate + NADP(+) + H2O = (S)-2-amino-6-oxoheptanedioate + NH4(+) + NADPH + H(+). It participates in amino-acid biosynthesis; L-lysine biosynthesis via DAP pathway; DL-2,6-diaminopimelate from (S)-tetrahydrodipicolinate: step 1/1. With respect to regulation, l,L-2,6-diaminopimelate and D,D-2,6-diaminopimelate competitively inhibit the oxidative deamination of meso-2,6-diaminopimelate. The enzyme is also inhibited by L-cysteine, and by p-chloromercuribenzoate, iodoacetic acid and HgCl(2) in vitro. Its function is as follows. Catalyzes the reversible NADPH-dependent reductive amination of L-2-amino-6-oxopimelate, the acyclic form of L-tetrahydrodipicolinate, to generate the meso compound, D,L-2,6-diaminopimelate. Probably plays a role in lysine biosynthesis. Exhibits a high substrate specificity for meso-2,6-diaminopimelate, since L,L-2,6-diaminopimelate, D,D-2,6-diaminopimelate, L-glutamate, L-alanine, L-leucine, L-valine, L-aspartate, L-threonine, L-homoserine, L-methionine, L-lysine, L-serine, L-phenylalanine, L-tyrosine, L-tryptophan, L-ornithine, L-histidine, L-arginine, D-glutamate, and D-alanine are not substrates for the oxidative deamination reaction. Can use NAD(+) only poorly since the activity observed in the presence of NAD(+) is about 3% of that with NADP(+). The protein is Meso-diaminopimelate D-dehydrogenase (ddh) of Corynebacterium glutamicum (strain ATCC 13032 / DSM 20300 / JCM 1318 / BCRC 11384 / CCUG 27702 / LMG 3730 / NBRC 12168 / NCIMB 10025 / NRRL B-2784 / 534).